The following is a 329-amino-acid chain: Probable cell division protein WhiA (329 aa).

Residues S276–R309 constitute a DNA-binding region (H-T-H motif). The segment at A308–G329 is disordered. The span at R309 to E318 shows a compositional bias: polar residues.

Belongs to the WhiA family.

In terms of biological role, involved in cell division and chromosome segregation. The chain is Probable cell division protein WhiA from Cutibacterium acnes (strain DSM 16379 / KPA171202) (Propionibacterium acnes).